The sequence spans 83 residues: Small ribosomal subunit protein uS17c (83 aa).

The protein belongs to the universal ribosomal protein uS17 family. As to quaternary structure, part of the 30S ribosomal subunit.

Its subcellular location is the plastid. The protein localises to the chloroplast. One of the primary rRNA binding proteins, it binds specifically to the 5'-end of 16S ribosomal RNA. This is Small ribosomal subunit protein uS17c (rps17) from Pyropia yezoensis (Susabi-nori).